We begin with the raw amino-acid sequence, 426 residues long: Cell cycle checkpoint control protein RAD9B (426 aa).

Serine 359 carries the phosphoserine modification.

Belongs to the rad9 family. In terms of assembly, interacts with HUS1, HUS1B, RAD1, RAD9A and RAD17. Expressed in testis and skeletal muscle.

This chain is Cell cycle checkpoint control protein RAD9B (RAD9B), found in Homo sapiens (Human).